The following is a 114-amino-acid chain: Fructose-bisphosphate aldolase 2 (114 aa).

35–38 serves as a coordination point for dihydroxyacetone phosphate; it reads NIDT.

This sequence belongs to the class II fructose-bisphosphate aldolase family. In terms of assembly, homodimer. Zn(2+) is required as a cofactor.

It catalyses the reaction beta-D-fructose 1,6-bisphosphate = D-glyceraldehyde 3-phosphate + dihydroxyacetone phosphate. It functions in the pathway carbohydrate biosynthesis; Calvin cycle. It participates in carbohydrate degradation; glycolysis; D-glyceraldehyde 3-phosphate and glycerone phosphate from D-glucose: step 4/4. Functionally, catalyzes the aldol condensation of dihydroxyacetone phosphate (DHAP or glycerone-phosphate) with glyceraldehyde 3-phosphate (G3P) to form fructose 1,6-bisphosphate (FBP) in gluconeogenesis and the reverse reaction in glycolysis. The sequence is that of Fructose-bisphosphate aldolase 2 (cbbA) from Rhodobacter capsulatus (Rhodopseudomonas capsulata).